The primary structure comprises 825 residues: PR domain zinc finger protein 1 (825 aa).

Positions 84-201 constitute an SET domain; it reads PRNLLFKYAT…ANQELLVWYC (118 aa). The span at 324–361 shows a compositional bias: low complexity; sequence ITRSPIPSSTTPSPSARSSPDQSLKSSSPHSSPGNTVS. The disordered stretch occupies residues 324–369; it reads ITRSPIPSSTTPSPSARSSPDQSLKSSSPHSSPGNTVSPVGPGSQE. Residues 527–574 form an interaction with PIAS1 region; that stretch reads HVVQPKATSAAMAAPSSDEAMNLIKNKRNMTGYKTLPYPLKKQNGKIK. 4 consecutive C2H2-type zinc fingers follow at residues 575 to 597, 603 to 625, 631 to 653, and 659 to 681; these read YECN…LRVH, FKCQ…YLVH, HECQ…LRLH, and YQCK…KRLH. Residue Lys-816 forms a Glycyl lysine isopeptide (Lys-Gly) (interchain with G-Cter in SUMO1); alternate linkage. A Glycyl lysine isopeptide (Lys-Gly) (interchain with G-Cter in SUMO2); alternate cross-link involves residue Lys-816.

Belongs to the class V-like SAM-binding methyltransferase superfamily. In terms of assembly, interacts with PRMT5. Interacts with FBXO10. Interacts with FBXO11. Interacts with multiple nuclear sumoylation E3 ligases, including CBX4, PIAS1, PIAS2, PIAS3, PIAS4, PML and RNF4, but not RANBP2. Interacts with LDB1, SMARCD3 and SMARCC1. Interacts with EEIG1; following TNFSF11/RANKL stimulation in bone marrow-derived macrophages, the interaction promotes the binding of PRDM1/BLIMP1 to the gene promoter of IRF8. Post-translationally, sumoylation at Lys-816 by PIAS1 augments transcriptional repressor activity, and is critical for plasma cell differentiation. Can be sumoylated with SUMO1 and SUMO2 by PML. Degradation of the wild-type protein mostly depends upon sumoylation, rather than ubiquitination. Desumoylated by SENP1 and SENP6. Ubiquitinated by the SCF(FBXO11) complex, leading to its degradation by the proteasome.

The protein resides in the nucleus. The protein localises to the cytoplasm. Its function is as follows. Transcription factor that mediates a transcriptional program in various innate and adaptive immune tissue-resident lymphocyte T cell types such as tissue-resident memory T (Trm), natural killer (trNK) and natural killer T (NKT) cells and negatively regulates gene expression of proteins that promote the egress of tissue-resident T-cell populations from non-lymphoid organs. Plays a role in the development, retention and long-term establishment of adaptive and innate tissue-resident lymphocyte T cell types in non-lymphoid organs, such as the skin and gut, but also in other nonbarrier tissues like liver and kidney, and therefore may provide immediate immunological protection against reactivating infections or viral reinfection. Binds specifically to the PRDI element in the promoter of the beta-interferon gene. Drives the maturation of B-lymphocytes into Ig secreting cells. Associates with the transcriptional repressor ZNF683 to chromatin at gene promoter regions. Binds to the promoter and acts as a transcriptional repressor of IRF8, thereby promotes transcription of osteoclast differentiation factors such as NFATC1 and EEIG1. This chain is PR domain zinc finger protein 1 (PRDM1), found in Homo sapiens (Human).